The chain runs to 249 residues: Triosephosphate isomerase (249 aa).

2 residues coordinate substrate: N12 and K14. K14 carries the post-translational modification N6-acetyllysine. Y68 is subject to 3'-nitrotyrosine. S80 bears the Phosphoserine mark. Residue H96 is the Electrophile of the active site. S106 is modified (phosphoserine). K142 is covalently cross-linked (Glycyl lysine isopeptide (Lys-Gly) (interchain with G-Cter in SUMO1)). K149 is subject to N6-succinyllysine. Position 156 is an N6-acetyllysine; alternate (K156). At K156 the chain carries N6-succinyllysine; alternate. E166 (proton acceptor) is an active-site residue. Phosphothreonine is present on T173. At K194 the chain carries N6-acetyllysine; alternate. K194 is subject to N6-succinyllysine; alternate. Residue K194 is modified to N6-methyllysine; alternate. S198 is modified (phosphoserine). 3'-nitrotyrosine is present on Y209. Position 212 is a phosphoserine (S212). Residue T214 is modified to Phosphothreonine. S223 carries the phosphoserine modification. K238 carries the N6-acetyllysine modification.

Belongs to the triosephosphate isomerase family. In terms of assembly, homodimer.

The protein localises to the cytoplasm. It carries out the reaction dihydroxyacetone phosphate = methylglyoxal + phosphate. It catalyses the reaction D-glyceraldehyde 3-phosphate = dihydroxyacetone phosphate. It participates in carbohydrate degradation; glycolysis; D-glyceraldehyde 3-phosphate from glycerone phosphate: step 1/1. The protein operates within carbohydrate biosynthesis; gluconeogenesis. Its function is as follows. Triosephosphate isomerase is an extremely efficient metabolic enzyme that catalyzes the interconversion between dihydroxyacetone phosphate (DHAP) and D-glyceraldehyde-3-phosphate (G3P) in glycolysis and gluconeogenesis. It is also responsible for the non-negligible production of methylglyoxal a reactive cytotoxic side-product that modifies and can alter proteins, DNA and lipids. The protein is Triosephosphate isomerase (Tpi1) of Rattus norvegicus (Rat).